The primary structure comprises 176 residues: Shikimate kinase (176 aa).

14-19 is an ATP binding site; sequence GAGKST. Ser-18 contacts Mg(2+). Asp-36, Arg-60, and Gly-83 together coordinate substrate. Residue Arg-121 coordinates ATP. Position 140 (Arg-140) interacts with substrate.

Belongs to the shikimate kinase family. In terms of assembly, monomer. The cofactor is Mg(2+).

The protein localises to the cytoplasm. It catalyses the reaction shikimate + ATP = 3-phosphoshikimate + ADP + H(+). The protein operates within metabolic intermediate biosynthesis; chorismate biosynthesis; chorismate from D-erythrose 4-phosphate and phosphoenolpyruvate: step 5/7. In terms of biological role, catalyzes the specific phosphorylation of the 3-hydroxyl group of shikimic acid using ATP as a cosubstrate. In Francisella philomiragia subsp. philomiragia (strain ATCC 25017 / CCUG 19701 / FSC 153 / O#319-036), this protein is Shikimate kinase.